We begin with the raw amino-acid sequence, 574 residues long: Kelch-like protein 18 (574 aa).

Positions 66 to 105 constitute a BTB domain; that stretch reads MFTNDMMECKQDEIVMQGMDPSALEALINFAYNGNLAIDQ. The BACK domain occupies 140–242; sequence CLGVRQFAET…RPQFLSDRVQ (103 aa). Kelch repeat units follow at residues 289–336, 337–383, 384–430, 432–477, 479–524, and 525–571; these read LIYA…VVNG, LLYA…VLDG, QIYV…VFEG, IYVS…SLGS, MFVC…ASCG, and RLYA…CIPL.

As to quaternary structure, interacts with AURKA. Interacts (via BTB domain) with CUL3. Interacts (via kelch repeats) with UNC119.

Its pathway is protein modification; protein ubiquitination. In terms of biological role, substrate-specific adapter of a BCR (BTB-CUL3-RBX1) E3 ubiquitin-protein ligase complex required for mitotic progression and cytokinesis. The BCR(KLHL18) E3 ubiquitin ligase complex mediates the ubiquitination of AURKA leading to its activation at the centrosome which is required for initiating mitotic entry. Regulates light-and dark-dependent alpha-transducin localization changes in rod photoreceptors through UNC119 ubiquitination and degradation. Preferentially ubiquitinates the unphosphorylated form of UNC119 over the phosphorylated form. In the presence of UNC119, under dark-adapted conditions alpha-transducin mislocalizes from the outer segment to the inner part of rod photoreceptors which leads to decreased photoreceptor damage caused by light. In Homo sapiens (Human), this protein is Kelch-like protein 18 (KLHL18).